Here is a 310-residue protein sequence, read N- to C-terminus: p-hydroxybenzoic acid efflux pump subunit AaeA (310 aa).

A helical membrane pass occupies residues 12-32 (AITVVLVILAFIAIFNAWVYY).

Belongs to the membrane fusion protein (MFP) (TC 8.A.1) family.

The protein localises to the cell inner membrane. Forms an efflux pump with AaeB. The sequence is that of p-hydroxybenzoic acid efflux pump subunit AaeA from Shigella sonnei (strain Ss046).